The chain runs to 292 residues: Aquaporin-3 (292 aa).

At 1-24 (MGRQKELVSRCGEMLHIRYRLLRQ) the chain is on the cytoplasmic side. A helical membrane pass occupies residues 25–42 (ALAECLGTLILVMFGCGS). Over 43–56 (VAQVVLSRGTHGGF) the chain is Extracellular. Residues 57 to 74 (LTINLAFGFAVTLGILIA) traverse the membrane as a helical segment. At 75-78 (GQVS) the chain is on the cytoplasmic side. The segment at residues 79 to 92 (GAHLNPAVTFAMCF) is an intramembrane region (discontinuously helical). An NPA 1 motif is present at residues 83–85 (NPA). Residues 93-100 (LAREPWIK) lie on the Cytoplasmic side of the membrane. The chain crosses the membrane as a helical span at residues 101–121 (LPIYTLAQTLGAFLGAGIVFG). Topologically, residues 122–159 (LYYDAIWHFADNQLFVSGPNGTAGIFATYPSGHLDMIN) are extracellular. N-linked (GlcNAc...) asparagine glycosylation is present at Asn-141. Residues 160-177 (GFFDQFIGTASLIVCVLA) form a helical membrane-spanning segment. Topologically, residues 178–189 (IVDPYNNPVPRG) are cytoplasmic. A helical membrane pass occupies residues 190–206 (LEAFTVGLVVLVIGTSM). Residues 207 to 210 (GFNS) lie on the Extracellular side of the membrane. Positions 211 to 224 (GYAVNPARDFGPRL) form an intramembrane region, discontinuously helical. Residues 215-217 (NPA) carry the NPA 2 motif. Residues 225-242 (FTALAGWGSAVFTTGQHW) lie on the Extracellular side of the membrane. The helical transmembrane segment at 243 to 264 (WWVPIVSPLLGSIAGVFVYQLM) threads the bilayer. Over 265-292 (IGCHLEQPPPSNEEENVKLAHVKHKEQI) the chain is Cytoplasmic.

The protein belongs to the MIP/aquaporin (TC 1.A.8) family. In terms of assembly, homotetramer; each monomer provides an independent glycerol/water pore. Could also exist in other oligomeric states. As to expression, widely expressed in epithelial cells of kidney (collecting ducts) and airways, in keratinocytes, immature dendritic cells and erythrocytes. Isoform 2 is not detectable in erythrocytes at the protein level.

Its subcellular location is the cell membrane. It localises to the basolateral cell membrane. The enzyme catalyses glycerol(in) = glycerol(out). It carries out the reaction H2O(in) = H2O(out). The catalysed reaction is H2O2(out) = H2O2(in). It catalyses the reaction urea(in) = urea(out). Its activity is regulated as follows. Glycerol transport is regulated by pH, with the porin being permeable to glycerol at pH 7.4 but not at pH 5.5. Water permeability, however, is not influenced by pH. Functionally, aquaglyceroporins form homotetrameric transmembrane channels, with each monomer independently mediating glycerol and water transport across the plasma membrane along their osmotic gradient. Could also be permeable to urea. Also participates in cell permeability to H2O2 and H2O2-mediated signaling. In skin, transports glycerol to the epidermis and stratum corneum, where it maintains hydration, elasticity, and supports lipid biosynthesis for barrier repair. In kidney, contributes to the reabsorption of water, helping the body maintain proper fluid balance. This Homo sapiens (Human) protein is Aquaporin-3.